Reading from the N-terminus, the 63-residue chain is MPQLDTSTWLLTILSMLLTLFVLFQLKISKHSYSPNPKLVPTKTQKQQTPWNITWTKIYLPLL.

Residues 8–24 (TWLLTILSMLLTLFVLF) form a helical membrane-spanning segment. K57 bears the N6-acetyllysine mark.

Belongs to the ATPase protein 8 family. In terms of assembly, component of the ATP synthase complex composed at least of ATP5F1A/subunit alpha, ATP5F1B/subunit beta, ATP5MC1/subunit c (homooctomer), MT-ATP6/subunit a, MT-ATP8/subunit 8, ATP5ME/subunit e, ATP5MF/subunit f, ATP5MG/subunit g, ATP5MK/subunit k, ATP5MJ/subunit j, ATP5F1C/subunit gamma, ATP5F1D/subunit delta, ATP5F1E/subunit epsilon, ATP5PF/subunit F6, ATP5PB/subunit b, ATP5PD/subunit d, ATP5PO/subunit OSCP. ATP synthase complex consists of a soluble F(1) head domain (subunits alpha(3) and beta(3)) - the catalytic core - and a membrane F(0) domain - the membrane proton channel (subunits c, a, 8, e, f, g, k and j). These two domains are linked by a central stalk (subunits gamma, delta, and epsilon) rotating inside the F1 region and a stationary peripheral stalk (subunits F6, b, d, and OSCP). Interacts with PRICKLE3.

It localises to the mitochondrion membrane. Functionally, subunit 8, of the mitochondrial membrane ATP synthase complex (F(1)F(0) ATP synthase or Complex V) that produces ATP from ADP in the presence of a proton gradient across the membrane which is generated by electron transport complexes of the respiratory chain. ATP synthase complex consist of a soluble F(1) head domain - the catalytic core - and a membrane F(1) domain - the membrane proton channel. These two domains are linked by a central stalk rotating inside the F(1) region and a stationary peripheral stalk. During catalysis, ATP synthesis in the catalytic domain of F(1) is coupled via a rotary mechanism of the central stalk subunits to proton translocation. In vivo, can only synthesize ATP although its ATP hydrolase activity can be activated artificially in vitro. Part of the complex F(0) domain. In Balaenoptera musculus (Blue whale), this protein is ATP synthase F(0) complex subunit 8.